Consider the following 87-residue polypeptide: MERKLALLLFLGMVTLASCGLREKHVQKLVALIPNDQLRSILKAVVHKVAKTQFGCPAYEGYCNNHCQDIERKDGECHGFKCKCAKD.

The signal sequence occupies residues 1–19; that stretch reads MERKLALLLFLGMVTLASC. Residues 53-87 enclose the BetaSPN-type CS-alpha/beta domain; the sequence is QFGCPAYEGYCNNHCQDIERKDGECHGFKCKCAKD. 3 cysteine pairs are disulfide-bonded: cysteine 56-cysteine 77, cysteine 63-cysteine 82, and cysteine 67-cysteine 84.

This sequence belongs to the long chain scorpion toxin family. Class 1 subfamily. Expressed by the venom gland.

It localises to the secreted. May have antibacterial activity. In terms of biological role, inhibits voltage-gated potassium channel. Functionally, does not induce hemolytic activity, lactate dehydrogenase (LDH) release from mast cells, mast cell degranulation, and antimicrobial effects. In vivo, injection into mice causes moderate edema formation, but induces very weak or no change in nociceptive sensibility. It also reduces mice locomotion, suggesting an increase in anxiety, but causes no alteration in rearing (standing on hind limbs). This Tityus costatus (Brazilian scorpion) protein is Scorpine-like peptide Tco 41.46-2.